Here is a 1041-residue protein sequence, read N- to C-terminus: Importin-9 (1041 aa).

Ala2 is subject to N-acetylalanine. The Importin N-terminal domain occupies 43-119 (AEEQIKVLEV…RELLPNGLRE (77 aa)). Positions 936-967 (QATPAEWSQDDSNDMWEDQEEEEEEEEDGLAG) are disordered. The span at 943–964 (SQDDSNDMWEDQEEEEEEEEDG) shows a compositional bias: acidic residues.

It belongs to the importin beta family. As to quaternary structure, interacts with histones H2A, H2B, H3 and H4. The binding is coupled to RanGTP cycles. Interacts with AKIRIN2; promoting association with pre-assembled proteasomes. Associates with pre-assembled proteasomes; interaction is indirect and mediated via interaction with AKIRIN2. Interacts with PPP2R1A and PPP2R1B.

The protein localises to the cytoplasm. Its subcellular location is the nucleus. Functionally, nuclear transport receptor that mediates nuclear import of proteins, such as histones, proteasome and actin. Serves as receptor for nuclear localization signals (NLS) in cargo substrates. Is thought to mediate docking of the importin/substrate complex to the nuclear pore complex (NPC) through binding to nucleoporin and the complex is subsequently translocated through the pore by an energy requiring, Ran-dependent mechanism. At the nucleoplasmic side of the NPC, Ran binds to the importin, the importin/substrate complex dissociates and importin is re-exported from the nucleus to the cytoplasm where GTP hydrolysis releases Ran. The directionality of nuclear import is thought to be conferred by an asymmetric distribution of the GTP- and GDP-bound forms of Ran between the cytoplasm and nucleus. Mediates the import of pre-assembled proteasomes into the nucleus; AKIRIN2 acts as a molecular bridge between IPO9 and the proteasome complex. Mediates the nuclear import of histones H2A, H2B, H4 and H4. In addition to nuclear import, also acts as a chaperone for histones by preventing inappropriate non-nucleosomal interactions. Mediates the nuclear import of actin. The sequence is that of Importin-9 from Homo sapiens (Human).